The sequence spans 367 residues: MTASQRTLMVMAGGTGGHVFPGLAVAHRMEAAGWRVVWLGNPAGMEATLVPKHGIPMEYVRFGGLRGKGLKTKLTLPVNLLRACWQSLGALRRVRPDVVLGMGGYITFPAGVMTALSGRPLVLHEQNSIAGLTNKVLAKLAKRVLVAFPGALPHAEWTGNPIRAELAHTEPPQARYASRGGPLNVLVVGGSLGAAALNEVVPRALALLAPGERPRVVHQAGVKHIEALKANYEAAGFAAGEDVRLVPFIDDMAAAYAAADLVICRSGAMTVSEIAAVGVAALFVPFPHAVDDHQTTNAAFLADAGAAVLVQQRDLSAELLADWLRGQSRASLADMAERSRSLAKPEATDEVARVCAKAAGANLEQLQ.

UDP-N-acetyl-alpha-D-glucosamine is bound by residues 15 to 17 (TGG), asparagine 127, arginine 163, serine 191, isoleucine 249, and glutamine 294.

The protein belongs to the glycosyltransferase 28 family. MurG subfamily.

Its subcellular location is the cell inner membrane. The catalysed reaction is di-trans,octa-cis-undecaprenyl diphospho-N-acetyl-alpha-D-muramoyl-L-alanyl-D-glutamyl-meso-2,6-diaminopimeloyl-D-alanyl-D-alanine + UDP-N-acetyl-alpha-D-glucosamine = di-trans,octa-cis-undecaprenyl diphospho-[N-acetyl-alpha-D-glucosaminyl-(1-&gt;4)]-N-acetyl-alpha-D-muramoyl-L-alanyl-D-glutamyl-meso-2,6-diaminopimeloyl-D-alanyl-D-alanine + UDP + H(+). The protein operates within cell wall biogenesis; peptidoglycan biosynthesis. Its function is as follows. Cell wall formation. Catalyzes the transfer of a GlcNAc subunit on undecaprenyl-pyrophosphoryl-MurNAc-pentapeptide (lipid intermediate I) to form undecaprenyl-pyrophosphoryl-MurNAc-(pentapeptide)GlcNAc (lipid intermediate II). This is UDP-N-acetylglucosamine--N-acetylmuramyl-(pentapeptide) pyrophosphoryl-undecaprenol N-acetylglucosamine transferase from Burkholderia cenocepacia (strain ATCC BAA-245 / DSM 16553 / LMG 16656 / NCTC 13227 / J2315 / CF5610) (Burkholderia cepacia (strain J2315)).